The sequence spans 392 residues: Phospho-N-acetylmuramoyl-pentapeptide-transferase (392 aa).

11 helical membrane-spanning segments follow: residues 24–44 (YLTM…LLAG), 76–96 (TMGG…WFDL), 100–120 (FVWI…VDDW), 137–157 (YFWQ…CISE), 170–190 (WVQS…VPFF), 193–213 (VSYP…IVGA), 225–245 (GLAI…AYVT), 262–282 (SGEL…FLWF), 289–309 (VFMG…IAVI), 314–334 (IVLA…MLQV), and 369–389 (QVVI…LSTL).

Belongs to the glycosyltransferase 4 family. MraY subfamily. Requires Mg(2+) as cofactor.

Its subcellular location is the cell inner membrane. It carries out the reaction UDP-N-acetyl-alpha-D-muramoyl-L-alanyl-gamma-D-glutamyl-meso-2,6-diaminopimeloyl-D-alanyl-D-alanine + di-trans,octa-cis-undecaprenyl phosphate = di-trans,octa-cis-undecaprenyl diphospho-N-acetyl-alpha-D-muramoyl-L-alanyl-D-glutamyl-meso-2,6-diaminopimeloyl-D-alanyl-D-alanine + UMP. It functions in the pathway cell wall biogenesis; peptidoglycan biosynthesis. Its function is as follows. Catalyzes the initial step of the lipid cycle reactions in the biosynthesis of the cell wall peptidoglycan: transfers peptidoglycan precursor phospho-MurNAc-pentapeptide from UDP-MurNAc-pentapeptide onto the lipid carrier undecaprenyl phosphate, yielding undecaprenyl-pyrophosphoryl-MurNAc-pentapeptide, known as lipid I. In Delftia acidovorans (strain DSM 14801 / SPH-1), this protein is Phospho-N-acetylmuramoyl-pentapeptide-transferase.